A 321-amino-acid chain; its full sequence is Probable arabinan endo-1,5-alpha-L-arabinosidase A (321 aa).

The first 19 residues, 1–19, serve as a signal peptide directing secretion; it reads MSASAFVAVASCLAALVHG. The active-site Proton acceptor is the D34. E200 (proton donor) is an active-site residue.

Belongs to the glycosyl hydrolase 43 family.

The protein localises to the secreted. It carries out the reaction Endohydrolysis of (1-&gt;5)-alpha-arabinofuranosidic linkages in (1-&gt;5)-arabinans.. Its pathway is glycan metabolism; L-arabinan degradation. Functionally, endo-1,5-alpha-L-arabinanase involved in degradation of pectin. Its preferred substrate is linear 1,5-alpha-L-arabinan. The sequence is that of Probable arabinan endo-1,5-alpha-L-arabinosidase A (abnA) from Neosartorya fischeri (strain ATCC 1020 / DSM 3700 / CBS 544.65 / FGSC A1164 / JCM 1740 / NRRL 181 / WB 181) (Aspergillus fischerianus).